We begin with the raw amino-acid sequence, 174 residues long: Protein COFACTOR ASSEMBLY OF COMPLEX C SUBUNIT B CCB3, chloroplastic (174 aa).

Residues 1–39 (MTTVTTSFVSFSPALMIFQKKSRRSSPNFRNRSTSLPIV) constitute a chloroplast transit peptide. The Lumenal segment spans residues 40-78 (SATLSHIEEAATTTNLIRQTNSISESLRNISLADLDPGT). Residues 79-99 (AKLAIGILGPALSAFGFLFIL) form a helical membrane-spanning segment. Residues 100–147 (RIVMSWYPKLPVDKFPYVLAYAPTEPILVQTRKVIPPLAGVDVTPVVW) lie on the Stromal side of the membrane. The chain crosses the membrane as a helical span at residues 148-168 (FGLVSFLSEILVGPQGLLVLV). Topologically, residues 169–174 (SQQQVN) are lumenal.

Belongs to the YggT family.

It localises to the plastid. It is found in the chloroplast thylakoid membrane. In terms of biological role, required for the biogenesis and accumulation of native cytochrome b6 in the thylakoid membrane. Controls the conversion of apocytochrome b6 to holocytochrome b6. Required for covalent binding of the c-type heme to cytochrome b6. The sequence is that of Protein COFACTOR ASSEMBLY OF COMPLEX C SUBUNIT B CCB3, chloroplastic from Arabidopsis thaliana (Mouse-ear cress).